Here is a 146-residue protein sequence, read N- to C-terminus: 3-dehydroquinate dehydratase (146 aa).

Tyr22 (proton acceptor) is an active-site residue. Asn74, His80, and Asp87 together coordinate substrate. His100 functions as the Proton donor in the catalytic mechanism. Residues 101–102 (LS) and Arg111 contribute to the substrate site.

It belongs to the type-II 3-dehydroquinase family. Homododecamer.

The catalysed reaction is 3-dehydroquinate = 3-dehydroshikimate + H2O. It functions in the pathway metabolic intermediate biosynthesis; chorismate biosynthesis; chorismate from D-erythrose 4-phosphate and phosphoenolpyruvate: step 3/7. In terms of biological role, catalyzes a trans-dehydration via an enolate intermediate. The polypeptide is 3-dehydroquinate dehydratase (Clostridium perfringens (strain SM101 / Type A)).